Reading from the N-terminus, the 546-residue chain is Chaperonin GroEL 1 (546 aa).

ATP-binding positions include 29–32 (TIGP), 86–90 (DGTTT), Gly-413, 477–479 (NAA), and Asp-493. The tract at residues 523-546 (PAEPAPQDGHGHGHGHSHPQGPGF) is disordered.

The protein belongs to the chaperonin (HSP60) family. As to quaternary structure, forms a cylinder of 14 subunits composed of two heptameric rings stacked back-to-back. Interacts with the co-chaperonin GroES.

It localises to the cytoplasm. The catalysed reaction is ATP + H2O + a folded polypeptide = ADP + phosphate + an unfolded polypeptide.. Together with its co-chaperonin GroES, plays an essential role in assisting protein folding. The GroEL-GroES system forms a nano-cage that allows encapsulation of the non-native substrate proteins and provides a physical environment optimized to promote and accelerate protein folding. The sequence is that of Chaperonin GroEL 1 from Frankia casuarinae (strain DSM 45818 / CECT 9043 / HFP020203 / CcI3).